Reading from the N-terminus, the 586-residue chain is Putative ABC transporter ATP-binding protein MG187 homolog (586 aa).

The region spanning 13 to 464 (IEFKNIVVDF…PANEFVATFL (452 aa)) is the ABC transporter domain. 45-52 (GPSGCGKT) provides a ligand contact to ATP.

This sequence belongs to the ABC transporter superfamily.

This chain is Putative ABC transporter ATP-binding protein MG187 homolog, found in Mycoplasma pneumoniae (strain ATCC 29342 / M129 / Subtype 1) (Mycoplasmoides pneumoniae).